The sequence spans 285 residues: Probable nudix hydrolase C6G9.05 (285 aa).

Positions 114–254 (TRFASVLMPL…DLLYVEFNID (141 aa)) constitute a Nudix hydrolase domain. The Nudix box signature appears at 153–175 (GRVEPSDGSHYYAALRETYEEIG). Positions 169 and 173 each coordinate Mg(2+).

It belongs to the Nudix hydrolase family. PCD1 subfamily. The cofactor is Mn(2+). It depends on Mg(2+) as a cofactor.

In terms of biological role, probably mediates the hydrolysis of some nucleoside diphosphate derivatives. This Schizosaccharomyces pombe (strain 972 / ATCC 24843) (Fission yeast) protein is Probable nudix hydrolase C6G9.05.